Consider the following 1357-residue polypeptide: DNA-directed RNA polymerase subunit beta (1357 aa).

The protein belongs to the RNA polymerase beta chain family. As to quaternary structure, the RNAP catalytic core consists of 2 alpha, 1 beta, 1 beta' and 1 omega subunit. When a sigma factor is associated with the core the holoenzyme is formed, which can initiate transcription.

It carries out the reaction RNA(n) + a ribonucleoside 5'-triphosphate = RNA(n+1) + diphosphate. Functionally, DNA-dependent RNA polymerase catalyzes the transcription of DNA into RNA using the four ribonucleoside triphosphates as substrates. This Ectopseudomonas mendocina (strain ymp) (Pseudomonas mendocina) protein is DNA-directed RNA polymerase subunit beta.